The primary structure comprises 222 residues: Probable transaldolase (222 aa).

Catalysis depends on lysine 83, which acts as the Schiff-base intermediate with substrate.

Belongs to the transaldolase family. Type 3B subfamily.

It is found in the cytoplasm. It carries out the reaction D-sedoheptulose 7-phosphate + D-glyceraldehyde 3-phosphate = D-erythrose 4-phosphate + beta-D-fructose 6-phosphate. Its pathway is carbohydrate degradation; pentose phosphate pathway; D-glyceraldehyde 3-phosphate and beta-D-fructose 6-phosphate from D-ribose 5-phosphate and D-xylulose 5-phosphate (non-oxidative stage): step 2/3. Transaldolase is important for the balance of metabolites in the pentose-phosphate pathway. This chain is Probable transaldolase, found in Nitrosopumilus maritimus (strain SCM1).